A 295-amino-acid chain; its full sequence is Translational activator of cytochrome c oxidase 1 (295 aa).

An N6-acetyllysine modification is found at K162. The stretch at V190–K225 forms a coiled coil.

Belongs to the TACO1 family.

The protein resides in the mitochondrion. Its function is as follows. Acts as a translational activator of mitochondrially-encoded cytochrome c oxidase 1. This Rattus norvegicus (Rat) protein is Translational activator of cytochrome c oxidase 1.